A 350-amino-acid polypeptide reads, in one-letter code: Ion-translocating oxidoreductase complex subunit D (350 aa).

A run of 5 helical transmembrane segments spans residues 20-40 (VMVL…YFFG), 44-64 (LIQI…ILKI), 68-88 (PVLN…LAIS), 89-109 (IPPL…IIFV), and 125-145 (MAGY…WLPV). Thr187 carries the FMN phosphoryl threonine modification. Helical transmembrane passes span 215 to 235 (SWQQ…ILLF), 241 to 261 (WHIP…AFAY), 267 to 287 (APPL…FILS), 300 to 320 (ILYA…GGYP), and 322 to 342 (AVAF…YYTQ).

This sequence belongs to the NqrB/RnfD family. In terms of assembly, the complex is composed of six subunits: RnfA, RnfB, RnfC, RnfD, RnfE and RnfG. The cofactor is FMN.

It is found in the cell inner membrane. Its function is as follows. Part of a membrane-bound complex that couples electron transfer with translocation of ions across the membrane. This is Ion-translocating oxidoreductase complex subunit D from Psychromonas ingrahamii (strain DSM 17664 / CCUG 51855 / 37).